A 204-amino-acid chain; its full sequence is Inositol diphosphatase DSP5 (204 aa).

In terms of domain architecture, Tyrosine-protein phosphatase spans 19–168 (NFSMVEDEIY…FDVLRLKQCL (150 aa)). A WPD loop important for active site topology region spans residues 75–87 (FGIEGKTDPPTPM). Cysteine 111 functions as the Phosphocysteine intermediate in the catalytic mechanism.

It belongs to the protein-tyrosine phosphatase family. Atypical dual-specificity phosphatase Siw14-like subfamily. As to expression, highly expressed in flowers. Expressed at low levels in roots, leaves, stems and siliques.

The enzyme catalyses 5-diphospho-1D-myo-inositol 1,2,3,4,6-pentakisphosphate + H2O = 1D-myo-inositol hexakisphosphate + phosphate + H(+). It carries out the reaction 1,5-bis(diphospho)-1D-myo-inositol 2,3,4,6-tetrakisphosphate + H2O = 1-diphospho-1D-myo-inositol 2,3,4,5,6-pentakisphosphate + phosphate + 2 H(+). The catalysed reaction is 3,5-bis(diphospho)-1D-myo-inositol 1,2,4,6-tetrakisphosphate + H2O = 3-diphospho-1D-myo-inositol 1,2,4,5,6-pentakisphosphate + phosphate + 2 H(+). It catalyses the reaction 6-diphospho-1D-myo-inositol pentakisphosphate + H2O = 1D-myo-inositol hexakisphosphate + phosphate + H(+). Its function is as follows. Cleaves the beta-phosphate at the 5-position of soluble inositol pyrophosphates. Has highest activity on 5-diphosphoinositol 1,2,3,4,6-pentakisphosphate (5-InsP(7)). Possesses low phosphotyrosine phosphatase activity in vitro. Dephosphorylates the phosphoinositides PI(3,5)P2. Hydrolyzes O-methylfluorescein phosphate in vitro. The polypeptide is Inositol diphosphatase DSP5 (Arabidopsis thaliana (Mouse-ear cress)).